Here is a 283-residue protein sequence, read N- to C-terminus: 4-diphosphocytidyl-2-C-methyl-D-erythritol kinase (283 aa).

Lys-10 is a catalytic residue. 99–109 (PMGGGLGGGSS) is a binding site for ATP. Asp-141 is an active-site residue.

It belongs to the GHMP kinase family. IspE subfamily. As to quaternary structure, homodimer.

It carries out the reaction 4-CDP-2-C-methyl-D-erythritol + ATP = 4-CDP-2-C-methyl-D-erythritol 2-phosphate + ADP + H(+). It participates in isoprenoid biosynthesis; isopentenyl diphosphate biosynthesis via DXP pathway; isopentenyl diphosphate from 1-deoxy-D-xylulose 5-phosphate: step 3/6. Functionally, catalyzes the phosphorylation of the position 2 hydroxy group of 4-diphosphocytidyl-2C-methyl-D-erythritol. In Shigella dysenteriae serotype 1 (strain Sd197), this protein is 4-diphosphocytidyl-2-C-methyl-D-erythritol kinase.